The following is a 276-amino-acid chain: Tumor necrosis factor-inducible gene 6 protein (276 aa).

The first 17 residues, 1-17 (MIILIYLFVLVWEEAQG), serve as a signal peptide directing secretion. In terms of domain architecture, Link spans 36–129 (GVYHREARSG…SERWDAYCYN (94 aa)). Disulfide bonds link Cys-58–Cys-127, Cys-82–Cys-103, and Cys-135–Cys-161. Asn-118 carries N-linked (GlcNAc...) asparagine glycosylation. Residues 135–247 (CGGVFTDPKR…GGFQIKYVTV (113 aa)) form the CUB domain. Residues Glu-183, Asp-191, Asp-232, Ser-234, and Val-235 each coordinate Ca(2+). A disulfide bond links Cys-188 and Cys-210. Residue Asn-258 is glycosylated (N-linked (GlcNAc...) asparagine).

As to quaternary structure, interacts (via Link domain) with inter-alpha-inhibitor (I-alpha-I) component bikunin. Interacts with ITIH2/HC2; this interaction is required for transesterification of the HC to hyaluronan. Interacts (via Link and CUB domains) with ITIH1. Chondroitin sulfate may be required for the stability of the complex. Interacts (via Link domain) with various C-X-C and C-C chemokines including PF4, CXCL8, CXCL11, CXCL12, CCL2, CCL7, CCL19, CCL21, and CCL27; this interaction interferes with chemokine binding to glycosaminoglycans. Interacts (primarily via Link domain) with BMP2; this interaction is inhibited by hyaluronan. Interacts (via both Link and CUB domains) with TNFSF11. Interacts (via CUB domain) with FN1 (via type III repeats 9-14); this interaction enhances fibronectin fibril assembly. TNFAIP6 may act as a bridging molecule between FN1 and THBS1. In terms of tissue distribution, vascular smooth muscle cells.

The protein localises to the secreted. Major regulator of extracellular matrix organization during tissue remodeling. Catalyzes the transfer of a heavy chain (HC) from inter-alpha-inhibitor (I-alpha-I) complex to hyaluronan. Cleaves the ester bond between the C-terminus of the HC and GalNAc residue of the chondroitin sulfate chain in I-alpha-I complex followed by transesterification of the HC to hyaluronan. In the process, potentiates the antiprotease function of I-alpha-I complex through release of free bikunin. Acts as a catalyst in the formation of hyaluronan-HC oligomers and hyaluronan-rich matrix surrounding the cumulus cell-oocyte complex, a necessary step for oocyte fertilization. Assembles hyaluronan in pericellular matrices that serve as platforms for receptor clustering and signaling. Enables binding of hyaluronan deposited on the surface of macrophages to LYVE1 on lymphatic endothelium and facilitates macrophage extravasation. Alters hyaluronan binding to functionally latent CD44 on vascular endothelium, switching CD44 into an active state that supports leukocyte rolling. Modulates the interaction of chemokines with extracellular matrix components and proteoglycans on endothelial cell surface, likely preventing chemokine gradient formation. In a negative feedback mechanism, may limit excessive neutrophil recruitment at inflammatory sites by antagonizing the association of CXCL8 with glycosaminoglycans on vascular endothelium. Has a role in osteogenesis and bone remodeling. Inhibits BMP2-dependent differentiation of mesenchymal stem cell to osteoblasts. Protects against bone erosion during inflammation by inhibiting TNFSF11/RANKL-dependent osteoclast activation. The sequence is that of Tumor necrosis factor-inducible gene 6 protein (TNFAIP6) from Oryctolagus cuniculus (Rabbit).